A 373-amino-acid chain; its full sequence is MKRLAVLGSTGSIGTQTLDIVRKYRDRLEVSLLAASRVSEKLLDQIDEFKPEYVYIAEGEKIKGVKTLIGEDGLYKLAQLDIDLFINGISGINGILPTYLLLENNKKLATANKEAIICLGEIYGDKYSDIFPIDSEHSAIFQCLLSGRKEEVEKIILTASGGPFLNLPKEEFRYITPDQALNHPRWKMGKKVSIDSATLMNKGFEIIEAHYLFNIPYSKIDVVIHPESIVHGLVQFIDGSVISHLSPPDMRIPICYAISYPERWEIDVRRLNLAQVKNLTFLEPDYDRFPLLNIAKECGEKGGACPTVLTTADEIAVNLFLEGKITFDMIPVYIQQVLDQADFSKPETFEDIIFIIKETEKIFWNILKLQNVN.

T10, G11, S12, I13, R37, and N112 together coordinate NADPH. Position 113 (K113) interacts with 1-deoxy-D-xylulose 5-phosphate. E114 contributes to the NADPH binding site. D134 contacts Mn(2+). Residues S135, E136, S160, and H183 each coordinate 1-deoxy-D-xylulose 5-phosphate. E136 lines the Mn(2+) pocket. An NADPH-binding site is contributed by G189. The 1-deoxy-D-xylulose 5-phosphate site is built by S196, N201, K202, and E205. E205 is a binding site for Mn(2+).

It belongs to the DXR family. It depends on Mg(2+) as a cofactor. Requires Mn(2+) as cofactor.

It carries out the reaction 2-C-methyl-D-erythritol 4-phosphate + NADP(+) = 1-deoxy-D-xylulose 5-phosphate + NADPH + H(+). It functions in the pathway isoprenoid biosynthesis; isopentenyl diphosphate biosynthesis via DXP pathway; isopentenyl diphosphate from 1-deoxy-D-xylulose 5-phosphate: step 1/6. Functionally, catalyzes the NADPH-dependent rearrangement and reduction of 1-deoxy-D-xylulose-5-phosphate (DXP) to 2-C-methyl-D-erythritol 4-phosphate (MEP). In Persephonella marina (strain DSM 14350 / EX-H1), this protein is 1-deoxy-D-xylulose 5-phosphate reductoisomerase.